Reading from the N-terminus, the 145-residue chain is Cuticle protein 65 (145 aa).

7 tandem repeats follow at residues 27–30 (AAPA), 33–37 (AAPAV), 39–42 (AAPA), 86–89 (AAPV), 92–95 (AAPA), 98–101 (AAPA), and 123–126 (AAPA).

In terms of biological role, component of the cuticle of migratory locust which contains more than 100 different structural proteins. This chain is Cuticle protein 65, found in Locusta migratoria (Migratory locust).